The chain runs to 142 residues: Photosystem II extrinsic protein U (142 aa).

A signal peptide spans 1-29; that stretch reads MKGLVRLLTVFSLLLGCWGWLGTTQIAQA.

It belongs to the PsbU family. PSII is composed of 1 copy each of membrane proteins PsbA, PsbB, PsbC, PsbD, PsbE, PsbF, PsbH, PsbI, PsbJ, PsbK, PsbL, PsbM, PsbT, PsbX, PsbY, PsbZ, Psb30/Ycf12, peripheral proteins PsbO, CyanoQ (PsbQ), PsbU, PsbV and a large number of cofactors. It forms dimeric complexes.

It is found in the cellular thylakoid membrane. In terms of biological role, one of the extrinsic, lumenal subunits of photosystem II (PSII). PSII is a light-driven water plastoquinone oxidoreductase, using light energy to abstract electrons from H(2)O, generating a proton gradient subsequently used for ATP formation. The extrinsic proteins stabilize the structure of photosystem II oxygen-evolving complex (OEC), the ion environment of oxygen evolution and protect the OEC against heat-induced inactivation. The chain is Photosystem II extrinsic protein U from Trichormus variabilis (strain ATCC 29413 / PCC 7937) (Anabaena variabilis).